A 681-amino-acid chain; its full sequence is Chaperone protein HtpG (681 aa).

An a; substrate-binding region spans residues 1 to 326 (MQKGNIGVTT…SPDIPLNVSR (326 aa)). The segment at 327 to 545 (SYLQSDSNVK…YMRRMKEMAN (219 aa)) is b. The segment at 546-681 (IQAGMSFYGE…NFVKRSIELI (136 aa)) is c. The tract at residues 589–620 (IQTEMNSVSKRRNELKDSQKDKKEEDIPTAEK) is disordered. Residues 599 to 620 (RRNELKDSQKDKKEEDIPTAEK) are compositionally biased toward basic and acidic residues.

The protein belongs to the heat shock protein 90 family. In terms of assembly, homodimer.

Its subcellular location is the cytoplasm. Its function is as follows. Molecular chaperone. Has ATPase activity. The chain is Chaperone protein HtpG from Bacteroides thetaiotaomicron (strain ATCC 29148 / DSM 2079 / JCM 5827 / CCUG 10774 / NCTC 10582 / VPI-5482 / E50).